Reading from the N-terminus, the 357-residue chain is sn-glycerol-3-phosphate import ATP-binding protein UgpC (357 aa).

The ABC transporter domain maps to 4-235; that stretch reads LKLQAVTKSY…PASLFVASFI (232 aa). 37 to 44 is an ATP binding site; that stretch reads GPSGCGKS.

It belongs to the ABC transporter superfamily. sn-glycerol-3-phosphate importer (TC 3.A.1.1.3) family. The complex is composed of two ATP-binding proteins (UgpC), two transmembrane proteins (UgpA and UgpE) and a solute-binding protein (UgpB).

The protein localises to the cell inner membrane. The enzyme catalyses sn-glycerol 3-phosphate(out) + ATP + H2O = sn-glycerol 3-phosphate(in) + ADP + phosphate + H(+). Its function is as follows. Part of the ABC transporter complex UgpBAEC involved in sn-glycerol-3-phosphate (G3P) import. Responsible for energy coupling to the transport system. The protein is sn-glycerol-3-phosphate import ATP-binding protein UgpC of Yersinia pseudotuberculosis serotype I (strain IP32953).